A 474-amino-acid chain; its full sequence is CUGBP Elav-like family member 4 (474 aa).

A sufficient for RNA-binding and MSE-dependent splicing activity region spans residues 1 to 287; that stretch reads MYIKMATLAN…AAFAAAQMQQ (287 aa). The segment covering 18–28 has biased composition (polar residues); it reads LSTNGLGSSPG. The interval 18-41 is disordered; it reads LSTNGLGSSPGSAGHMNGLSHSPG. 2 RRM domains span residues 54-135 and 141-221; these read IKLF…PADS and RKLF…FADT. Residues 228-247 form a necessary for TNNT2 exon 5 inclusion region; sequence RRMQQMAGQMGMFNPMAIPF. The region spanning 392–467 is the RRM 3 domain; it reads PQPPPMIPQQ…KRLKVQLKRP (76 aa).

The protein belongs to the CELF/BRUNOL family.

Its subcellular location is the nucleus. It localises to the cytoplasm. Its function is as follows. RNA-binding protein implicated in the regulation of pre-mRNA alternative splicing. Mediates exon inclusion and/or exclusion in pre-mRNA that are subject to tissue-specific and developmentally regulated alternative splicing. Specifically activates exon 5 inclusion of cardiac isoforms of TNNT2 during heart remodeling at the juvenile to adult transition. Promotes exclusion of both the smooth muscle (SM) and non-muscle (NM) exons in actinin pre-mRNAs. Activates the splicing of MAPT/Tau exon 10. Binds to muscle-specific splicing enhancer (MSE) intronic sites flanking the alternative exon 5 of TNNT2 pre-mRNA. This chain is CUGBP Elav-like family member 4 (CELF4), found in Macaca fascicularis (Crab-eating macaque).